An 898-amino-acid chain; its full sequence is Nitrate reductase [NAD(P)H] (898 aa).

Basic and acidic residues predominate over residues 1-15 (MAASVENRRFTHHEP). A disordered region spans residues 1–65 (MAASVENRRF…SSSEDENEND (65 aa)). Mo-molybdopterin is bound at residue cysteine 180. The Cytochrome b5 heme-binding domain occupies 528 to 603 (SKMFSMSEVK…LEDYRIGELI (76 aa)). The heme site is built by histidine 563 and histidine 586. The FAD-binding FR-type domain occupies 642-754 (GAKIPTKLVY…KGPLGHVEYT (113 aa)). Residues 694–697 (RAYT), 711–715 (VVKIY), phenylalanine 716, phenylalanine 723, 728–730 (LMS), and threonine 781 contribute to the FAD site.

This sequence belongs to the nitrate reductase family. In terms of assembly, homodimer. Requires FAD as cofactor. Heme serves as cofactor. The cofactor is Mo-molybdopterin.

It carries out the reaction nitrite + NAD(+) + H2O = nitrate + NADH + H(+). The enzyme catalyses nitrite + NADP(+) + H2O = nitrate + NADPH + H(+). Nitrate reductase is a key enzyme involved in the first step of nitrate assimilation in plants, fungi and bacteria. The sequence is that of Nitrate reductase [NAD(P)H] (NIA1) from Betula pendula (European white birch).